A 461-amino-acid chain; its full sequence is uncharacterized protein (461 aa).

Positions 1-19 are enriched in basic and acidic residues; sequence MEKCSHESGRHSAENDGKY. Residues 1-21 are disordered; sequence MEKCSHESGRHSAENDGKYDI.

Belongs to the CapA family.

Could be involved in the biosynthesis of a cell wall component. This is an uncharacterized protein from Sinorhizobium fredii (strain NBRC 101917 / NGR234).